The sequence spans 53 residues: MLKWILILLIVAAVAGLLGMHSLAGAAMTGAKILIAIVLILFLLAVLGIIAIA.

A run of 2 helical transmembrane segments spans residues 4–24 (WILI…HSLA) and 33–53 (ILIA…IAIA).

It belongs to the UPF0391 family.

Its subcellular location is the cell membrane. The polypeptide is UPF0391 membrane protein Meso_3392 (Chelativorans sp. (strain BNC1)).